The chain runs to 413 residues: Putative competence-damage inducible protein (413 aa).

Belongs to the CinA family.

The protein is Putative competence-damage inducible protein of Halothermothrix orenii (strain H 168 / OCM 544 / DSM 9562).